Consider the following 421-residue polypeptide: Testin (421 aa).

In terms of domain architecture, PET spans 92–199 (MILTNPVAAK…GDVKLPCEMD (108 aa)). Residues 133 to 164 (EKQPVAGSEGAQYRKKQLAKQLPAHDQDPSKC) form a disordered region. Over residues 155–164 (PAHDQDPSKC) the composition is skewed to basic and acidic residues. 3 LIM zinc-binding domains span residues 234–297 (YSCY…CDSE), 299–359 (PRCA…NHAV), and 362–421 (QGCH…KMMS).

The protein belongs to the prickle / espinas / testin family. In terms of assembly, interacts via LIM domain 1 with ZYX. Interacts (via LIM domain 3) with ENAH and VASP. Interacts with ALKBH4, talin, actin, alpha-actinin, GRIP1 and PXN. Interacts (via LIM domain 2) with ACTL7A (via N-terminus). Heterodimer with ACTL7A; the heterodimer interacts with ENAH to form a heterotrimer.

It localises to the cytoplasm. Its subcellular location is the cell junction. The protein localises to the focal adhesion. In terms of biological role, scaffold protein that may play a role in cell adhesion, cell spreading and in the reorganization of the actin cytoskeleton. Plays a role in the regulation of cell proliferation. May act as a tumor suppressor. This chain is Testin (TES), found in Saimiri boliviensis boliviensis (Bolivian squirrel monkey).